Reading from the N-terminus, the 1248-residue chain is MNGYVEFSPSPTKESVEPQPSQAVLQEDVDMSSGSSGHENCSMGRDSQGSDCDDNGKELRMLVEPSDTHSSPDAFRLMMTEPQHNPSTSGCSSEQSAKANAHKELIRTLRELKVHLPADKKAKGKASTLAILKYALRSVKQVKANEEYYQLLMSSESQPCSMDVPSYTVEQVEGITSEYIVKNADMFAVAVSLVSGKILYISNQVASIFHCKKDAFSDAKFVEFLAPHDVSVFHSYTTPYKLPPWSMCCGVDSFTQECMEEKSFFCRVSVGKHHESEIRYQPFRMTPYLVKVQEQQGAESQLCCLLLAERIHSGYEAPRIPPEKRIFTTTHIPNCLFQDVDERAVPLLGYLPQDLIETPVLVQLHPSDRPLMLAIHKKILQAGGQPFDYSPIRFRARNGEYITLDTSWSSFINPWSRKISFIIGRHKVRVGPLNEDVFAASPCPEGKTPHPSIQELTEQIHRLLMQPVPHSGSSGYGSLGSNGSHEHLMSQTSSSDSNGHEESRWRKSGISKNGSKTQTRSHFSHESGEQKEIAVTEMQSSTPAQAKAAPTVERDSSGSSLPKASFPEELAYKNQPACSYQQISCLDSVIRYLESCNEAATLKRKCEFPANIPSRKATVSPGLHAEEAAPPPSKVSSHAEVRARLSSLTLPDKAESVVSLTSQCSYSSTIVHVGDKKPQPELETVEDAVSGPESLDGAPGGLSQEKGPLQKLGLTKEVLAAHTQREEQGFLQRFREVSRLGALQAHRQNYRAQASERAAPGLRNASGMDSSWKKTGKNRKLKSKRVKTRDSSESTGSGGPVSHRPPLVGLNATAWSPSDTSQSSCPSAPFPAPVPAYPLPVFEAPGITSTPAPPEAAHSSFTVPVVPMGAQPDFAVQPLPLAAPLAPVLAFMLPSYPFPPANPNLSHAFFPGQPHFPAQPTFASEMTPASQADFPSQTPLLRQQCTCPVTPPAATVTSGRASPPLFQSRGSSPLQLNLLQLEEAPEGSTGAAGTSGTTGTAAAGLDCTPGTSRDRQPKAPSTCKEPSDTQNSDALSTSSDLLNLLLAEDLCSATGSALSGSGASATSDSLGSGSLGCDASRSGAGSSDTSHTSKYFGSIDSSENNHKAKVSTDTEESEQFIKYVLQDPIWLLVANTDDSVMMTYQLPSRDLESVLREGRERLKLLQRAQPRFTEGQRRELREVHPWVQTGGLPAAIDVAECVYCKSERKGDICLPYEEDSPSPGLCDTSEAKEEEGEQLTGPRIEAQT.

The interval 1–57 (MNGYVEFSPSPTKESVEPQPSQAVLQEDVDMSSGSSGHENCSMGRDSQGSDCDDNGK) is disordered. Polar residues-rich tracts occupy residues 9–24 (PSPTKESVEPQPSQAV) and 32–50 (SSGSSGHENCSMGRDSQGS). The Nuclear export signal 1 motif lies at 105-114 (LIRTLRELKV). Positions 175 to 242 (ITSEYIVKNA…FHSYTTPYKL (68 aa)) constitute a PAS 1 domain. Positions 302-306 (LCCLL) match the LXXLL motif. One can recognise a PAS 2 domain in the interval 315 to 381 (YEAPRIPPEK…MLAIHKKILQ (67 aa)). The region spanning 389–432 (YSPIRFRARNGEYITLDTSWSSFINPWSRKISFIIGRHKVRVGP) is the PAC domain. Residues 456-465 (LTEQIHRLLM) carry the Nuclear export signal 2 motif. Disordered stretches follow at residues 467-563 (PVPH…SLPK) and 619-638 (VSPGLHAEEAAPPPSKVSSH). The tract at residues 474–478 (SGYGS) is important for protein stability. The interval 506–706 (RKSGISKNGS…GAPGGLSQEK (201 aa)) is CSNK1E binding domain. A compositionally biased stretch (polar residues) spans 510–521 (ISKNGSKTQTRS). Ser521, Ser524, Ser527, and Ser540 each carry phosphoserine. Residues 523–534 (FSHESGEQKEIA) are compositionally biased toward basic and acidic residues. Phosphoserine occurs at positions 656, 690, 694, 703, and 755. 2 disordered regions span residues 675 to 708 (DKKPQPELETVEDAVSGPESLDGAPGGLSQEKGP) and 751 to 829 (RAQA…PSAP). Residues 773-789 (KKTGKNRKLKSKRVKTR) carry the Nuclear localization signal motif. Residues 774–787 (KTGKNRKLKSKRVK) are compositionally biased toward basic residues. Residues 816–827 (SPSDTSQSSCPS) show a composition bias toward low complexity. The interaction with PPARG stretch occupies residues 873–1058 (DFAVQPLPLA…DLCSATGSAL (186 aa)). Residue Ser930 is modified to Phosphoserine. The disordered stretch occupies residues 950 to 971 (TPPAATVTSGRASPPLFQSRGS). Thr955 carries the post-translational modification Phosphothreonine. Position 962 is a phosphoserine (Ser962). Positions 974 to 981 (LQLNLLQL) match the Nuclear export signal 3 motif. The interval 984–1035 (APEGSTGAAGTSGTTGTAAAGLDCTPGTSRDRQPKAPSTCKEPSDTQNSDAL) is disordered. Low complexity predominate over residues 987–1004 (GSTGAAGTSGTTGTAAAG). Positions 1042–1046 (LNLLL) match the LXXLL motif. The segment covering 1057–1080 (ALSGSGASATSDSLGSGSLGCDAS) has biased composition (low complexity). A disordered region spans residues 1057 to 1113 (ALSGSGASATSDSLGSGSLGCDASRSGAGSSDTSHTSKYFGSIDSSENNHKAKVSTD). Polar residues predominate over residues 1083-1102 (GAGSSDTSHTSKYFGSIDSS). Positions 1103-1112 (ENNHKAKVST) are enriched in basic and acidic residues. Position 1117 is a phosphoserine (Ser1117). The CRY binding domain stretch occupies residues 1148 to 1248 (SRDLESVLRE…LTGPRIEAQT (101 aa)). The disordered stretch occupies residues 1215 to 1248 (PYEEDSPSPGLCDTSEAKEEEGEQLTGPRIEAQT).

In terms of assembly, homodimer. Component of the circadian core oscillator, which includes the CRY proteins, CLOCK or NPAS2, BMAL1 or BMAL2, CSNK1D and/or CSNK1E, TIMELESS, and the PER proteins. Interacts with CLOCK-BMAL1 (off DNA). Interacts with BMAL2. Interacts directly with PER1 and PER3, and through a C-terminal domain, with CRY1 and CRY2. Interacts (via PAS 2 domain) with TIMELESS. Interacts with NFIL3. Different large complexes have been identified with different repressive functions. The core of PER complexes is composed of at least PER1, PER2, PER3, CRY1, CRY2, CSNK1D and/or CSNK1E. The large PER complex involved in the repression of transcriptional termination is composed of at least PER2, CDK9, DDX5, DHX9, NCBP1 and POLR2A (active). The large PER complex involved in the histone deacetylation is composed of at least HDAC1, PER2, SFPQ and SIN3A. The large PER complex involved in the histone methylation is composed of at least PER2, CBX3, TRIM28, SUV39H1 and/or SUV39H2; CBX3 mediates the formation of the complex. Interacts with SETX; the interaction inhibits termination of circadian target genes. Interacts with the nuclear receptors HNF4A, NR1D1, NR4A2, RORA, PPARA, PPARG and THRA; the interaction with at least PPARG is ligand dependent. Interacts with PML. Interacts (phosphorylated) with BTRC and FBXW11; the interactions trigger proteasomal degradation. Interacts with NONO and SFPQ. Interacts with PRKCDBP. Interacts with MAGEL2. Interacts with MAP1LC3B. Interacts with HNF4A. In terms of processing, acetylated. Deacetylated by SIRT1, resulting in decreased protein stability. Deacetylated by SIRT6, preventing its degradation by the proteasome, resulting in increased protein stability. Post-translationally, phosphorylated by CSNK1E and CSNK1D. Phosphorylation results in PER2 protein degradation. May be dephosphorylated by PP1. Ubiquitinated, leading to its proteasomal degradation. Ubiquitination may be inhibited by CRY1. Expressed in the brain, mainly in the suprachiasmatic nucleus (SCN). Expression also found in the harderian gland, lung, eye, intestine, liver and skeletal muscle.

It is found in the nucleus. It localises to the cytoplasm. The protein resides in the perinuclear region. In terms of biological role, transcriptional repressor which forms a core component of the circadian clock. The circadian clock, an internal time-keeping system, regulates various physiological processes through the generation of approximately 24 hour circadian rhythms in gene expression, which are translated into rhythms in metabolism and behavior. It is derived from the Latin roots 'circa' (about) and 'diem' (day) and acts as an important regulator of a wide array of physiological functions including metabolism, sleep, body temperature, blood pressure, endocrine, immune, cardiovascular, and renal function. Consists of two major components: the central clock, residing in the suprachiasmatic nucleus (SCN) of the brain, and the peripheral clocks that are present in nearly every tissue and organ system. Both the central and peripheral clocks can be reset by environmental cues, also known as Zeitgebers (German for 'timegivers'). The predominant Zeitgeber for the central clock is light, which is sensed by retina and signals directly to the SCN. The central clock entrains the peripheral clocks through neuronal and hormonal signals, body temperature and feeding-related cues, aligning all clocks with the external light/dark cycle. Circadian rhythms allow an organism to achieve temporal homeostasis with its environment at the molecular level by regulating gene expression to create a peak of protein expression once every 24 hours to control when a particular physiological process is most active with respect to the solar day. Transcription and translation of core clock components (CLOCK, NPAS2, BMAL1, BMAL2, PER1, PER2, PER3, CRY1 and CRY2) plays a critical role in rhythm generation, whereas delays imposed by post-translational modifications (PTMs) are important for determining the period (tau) of the rhythms (tau refers to the period of a rhythm and is the length, in time, of one complete cycle). A diurnal rhythm is synchronized with the day/night cycle, while the ultradian and infradian rhythms have a period shorter and longer than 24 hours, respectively. Disruptions in the circadian rhythms contribute to the pathology of cardiovascular diseases, cancer, metabolic syndrome and aging. A transcription/translation feedback loop (TTFL) forms the core of the molecular circadian clock mechanism. Transcription factors, CLOCK or NPAS2 and BMAL1 or BMAL2, form the positive limb of the feedback loop, act in the form of a heterodimer and activate the transcription of core clock genes and clock-controlled genes (involved in key metabolic processes), harboring E-box elements (5'-CACGTG-3') within their promoters. The core clock genes: PER1/2/3 and CRY1/2 which are transcriptional repressors form the negative limb of the feedback loop and interact with the CLOCK|NPAS2-BMAL1|BMAL2 heterodimer inhibiting its activity and thereby negatively regulating their own expression. This heterodimer also activates nuclear receptors NR1D1/2 and RORA/B/G, which form a second feedback loop and which activate and repress BMAL1 transcription, respectively. PER1 and PER2 proteins transport CRY1 and CRY2 into the nucleus with appropriate circadian timing, but also contribute directly to repression of clock-controlled target genes through interaction with several classes of RNA-binding proteins, helicases and others transcriptional repressors. PER appears to regulate circadian control of transcription by at least three different modes. First, interacts directly with the CLOCK-BMAL1 at the tail end of the nascent transcript peak to recruit complexes containing the SIN3-HDAC that remodel chromatin to repress transcription. Second, brings H3K9 methyltransferases such as SUV39H1 and SUV39H2 to the E-box elements of the circadian target genes, like PER2 itself or PER1. The recruitment of each repressive modifier to the DNA seems to be very precisely temporally orchestrated by the large PER complex, the deacetylases acting before than the methyltransferases. Additionally, large PER complexes are also recruited to the target genes 3' termination site through interactions with RNA-binding proteins and helicases that may play a role in transcription termination to regulate transcription independently of CLOCK-BMAL1 interactions. Recruitment of large PER complexes to the elongating polymerase at PER and CRY termination sites inhibited SETX action, impeding RNA polymerase II release and thereby repressing transcriptional reinitiation. May propagate clock information to metabolic pathways via the interaction with nuclear receptors. Coactivator of PPARA and corepressor of NR1D1, binds rhythmically at the promoter of nuclear receptors target genes like BMAL1 or G6PC1. Directly and specifically represses PPARG proadipogenic activity by blocking PPARG recruitment to target promoters and thereby transcriptional activation. Required for fatty acid and lipid metabolism, is involved as well in the regulation of circulating insulin levels. Plays an important role in the maintenance of cardiovascular functions through the regulation of NO and vasodilatatory prostaglandins production in aortas. Controls circadian glutamate uptake in synaptic vesicles through the regulation of VGLUT1 expression. May also be involved in the regulation of inflammatory processes. Represses the CLOCK-BMAL1 induced transcription of BHLHE40/DEC1 and ATF4. Negatively regulates the formation of the TIMELESS-CRY1 complex by competing with TIMELESS for binding to CRY1. This chain is Period circadian protein homolog 2 (PER2), found in Spalax judaei (Judean Mountains blind mole rat).